The primary structure comprises 2181 residues: Non-reducing polyketide synthase dpmaA (2181 aa).

Residues 74 to 180 (QWVKGNSTQP…LALCCGAYID (107 aa)) form an N-terminal acylcarrier protein transacylase domain (SAT) region. One can recognise a Ketosynthase family 3 (KS3) domain in the interval 347 to 779 (QAQLLVLGPV…GTNAAMLVCQ (433 aa)). Active-site for beta-ketoacyl synthase activity residues include Cys-525, His-661, and His-702. The malonyl-CoA:ACP transacylase (MAT) domain stretch occupies residues 891–1193 (VLAGQTGRRV…SFYPAALGEP (303 aa)). The active-site For acyl/malonyl transferase activity is Ser-977. Residues 1269–1401 (VSLIGKTQNA…GVITLQEVYS (133 aa)) form an N-terminal hotdog fold region. Residues 1269–1579 (VSLIGKTQNA…FQKIAISSLK (311 aa)) enclose the PKS/mFAS DH domain. Residues 1276–1573 (QNAGVQTVEY…TILGAKFQKI (298 aa)) form a product template (PT) domain region. The segment at 1425-1579 (SASVVQGDFI…FQKIAISSLK (155 aa)) is C-terminal hotdog fold. The segment covering 1587-1603 (GVPQTSGGRTPSSSITE) has biased composition (polar residues). Disordered regions lie at residues 1587 to 1618 (GVPQTSGGRTPSSSITEFISGDDASPCPPIPG) and 1652 to 1675 (ISGSSRSTSSSPPSLESRSQAMET). Over residues 1653–1670 (SGSSRSTSSSPPSLESRS) the composition is skewed to low complexity. The Carrier domain occupies 1677–1753 (EITEGAGSAL…TLFHTIFPQQ (77 aa)). Position 1713 is an O-(pantetheine 4'-phosphoryl)serine (Ser-1713). The tract at residues 1982 to 2164 (EFMNCLFSYN…QSGFDHIDWT (183 aa)) is methyltransferase (CMeT) domain.

Its pathway is secondary metabolite biosynthesis; terpenoid biosynthesis. Non-reducing polyketide synthase; part of the gene cluster that mediates the biosynthesis of the diterpenoid pyrones subglutinols A and B. The first step of the pathway is the synthesis of the alpha-pyrone moiety by the polyketide synthase dpmaA via condensation of one acetyl-CoA starter unit with 3 malonyl-CoA units and 2 methylations. The alpha-pyrone is then combined with geranylgeranyl pyrophosphate (GGPP) formed by the GGPP synthase dpmaD through the action of the prenyltransferase dpmaC to yield a linear alpha-pyrone diterpenoid. Subsequent steps in the diterpenoid pyrone biosynthetic pathway involve the decalin core formation, which is initiated by the epoxidation of the C10-C11 olefin by the FAD-dependent oxidoreductase dpmaE, and is followed by a cyclization cascade catalyzed by the terpene cyclase dpmaB. The dehydrogenase dpmaF is then involved in tetrahydrofuran (THF) ring formation at the C5 unit to complete the formation of subglutinols A and B. The protein is Non-reducing polyketide synthase dpmaA of Metarhizium anisopliae (Entomophthora anisopliae).